A 209-amino-acid polypeptide reads, in one-letter code: Nascent polypeptide-associated complex subunit alpha-like protein 5 (209 aa).

The interval 23–71 is disordered; sequence EKEDDVVVEDVKDGEEEDDDEDDEDVEVEGEGGNENAKQSRSEKKSRKA. Residues 25–54 are compositionally biased toward acidic residues; sequence EDDVVVEDVKDGEEEDDDEDDEDVEVEGEG. One can recognise an NAC-A/B domain in the interval 62 to 127; it reads SRSEKKSRKA…AKVDDLSSQL (66 aa). One can recognise a UBA domain in the interval 170–207; the sequence is VEARDIDLVMTQAGVSKAKAVSALKANDGDIVSAIMEL.

It belongs to the NAC-alpha family.

Functionally, may promote appropriate targeting of ribosome-nascent polypeptide complexes. In Arabidopsis thaliana (Mouse-ear cress), this protein is Nascent polypeptide-associated complex subunit alpha-like protein 5.